A 1666-amino-acid chain; its full sequence is Cortactin-binding protein 2 (1666 aa).

5 disordered regions span residues 1–25 (MATD…APAE), 202–224 (EKKR…AEME), 366–411 (IVSS…PAIQ), 457–481 (NANN…SPTS), and 501–619 (RFTS…PKPS). Positions 120–274 (KMQERMSTQL…MTEQLKRGND (155 aa)) form a coiled coil. 2 stretches are compositionally biased toward low complexity: residues 385–398 (GPST…PSST) and 457–468 (NANNDQDQNGNN). The segment covering 469-481 (TQSPPSRDVSPTS) has biased composition (polar residues). Asymmetric dimethylarginine is present on Arg-501. ANK repeat units follow at residues 712–742 (GRPT…DINH), 746–775 (DGHS…QVNA), 779–808 (DGFT…NINH), 812–841 (EGQT…DRSV), 845–874 (DGWT…PACG), and 915–945 (EGWT…EPER). Ser-1527 is subject to Phosphoserine. The span at 1545-1566 (SESDISKIADTRDDLRRFDSSR) shows a compositional bias: basic and acidic residues. Disordered stretches follow at residues 1545–1601 (SESD…RSNR) and 1620–1666 (RSKI…KPNQ). A compositionally biased stretch (polar residues) spans 1585–1594 (KEVSPLSSHQ). Over residues 1627–1641 (SQNTKRSSSSSNTRQ) the composition is skewed to low complexity. Residues 1648 to 1666 (SKDEIWNLRNNEQIEKPNQ) are compositionally biased toward basic and acidic residues.

Interacts with CTTN/cortactin SH3 domain. Interacts with STRN, STRN4/zinedin and MOB4/phocein; this interactions mediate the association with the STRIPAK core complex and may regulate dendritic spine distribution of the STRIPAK complex in hippocampal neurons. Activation of glutamate receptors weakens the interaction with STRN and STRN4.

The protein resides in the cytoplasm. It is found in the cell cortex. It localises to the cell projection. The protein localises to the dendritic spine. Functionally, regulates the dendritic spine distribution of CTTN/cortactin in hippocampal neurons, and thus controls dendritic spinogenesis and dendritic spine maintenance. Associates with the striatin-interacting phosphatase and kinase (STRIPAK) core complex to regulate dendritic spine distribution of the STRIPAK complex in hippocampal neurons. This is Cortactin-binding protein 2 (CTTNBP2) from Echinops telfairi (Lesser hedgehog tenrec).